We begin with the raw amino-acid sequence, 427 residues long: Flavohemoprotein (427 aa).

Residues 30–168 (ELNESQKQYI…LAKILIDSEK (139 aa)) enclose the Globin domain. His114 is a binding site for heme b. Active-site charge relay system residues include Tyr124 and Glu167. Residues 176–427 (WNGFVEFKVT…QSEFFGPYIP (252 aa)) form a reductase region. The FAD-binding FR-type domain occupies 177 to 285 (NGFVEFKVTE…SPPAGNFVYK (109 aa)). FAD contacts are provided by residues Tyr216 and 232–235 (REYS). An NADP(+)-binding site is contributed by 301-306 (GIGITP). 421–424 (FFGP) provides a ligand contact to FAD.

The protein belongs to the globin family. Two-domain flavohemoproteins subfamily. This sequence in the C-terminal section; belongs to the flavoprotein pyridine nucleotide cytochrome reductase family. The cofactor is FAD. Requires heme b as cofactor.

The protein resides in the cytoplasm. The protein localises to the nucleus. It catalyses the reaction 2 nitric oxide + NADPH + 2 O2 = 2 nitrate + NADP(+) + H(+). The catalysed reaction is 2 nitric oxide + NADH + 2 O2 = 2 nitrate + NAD(+) + H(+). In terms of biological role, is involved in NO detoxification in an aerobic process, termed nitric oxide dioxygenase (NOD) reaction that utilizes O(2) and NAD(P)H to convert NO to nitrate, which protects the fungus from various noxious nitrogen compounds. Therefore, plays a central role in the inducible response to nitrosative stress. In the presence of oxygen and NADH, it has NADH oxidase activity, which leads to the generation of superoxide and H(2)O(2). Under anaerobic conditions, it also exhibits nitric oxide reductase and FAD reductase activities. However, all these reactions are much lower than NOD activity. The chain is Flavohemoprotein from Schizosaccharomyces pombe (strain 972 / ATCC 24843) (Fission yeast).